A 212-amino-acid chain; its full sequence is Thymidylate kinase (212 aa).

11-18 contacts ATP; that stretch reads GPEGAGKT.

Belongs to the thymidylate kinase family.

It carries out the reaction dTMP + ATP = dTDP + ADP. In terms of biological role, phosphorylation of dTMP to form dTDP in both de novo and salvage pathways of dTTP synthesis. This Streptococcus pneumoniae serotype 19F (strain G54) protein is Thymidylate kinase.